Reading from the N-terminus, the 133-residue chain is Small ribosomal subunit protein uS11 (133 aa).

Belongs to the universal ribosomal protein uS11 family. In terms of assembly, part of the 30S ribosomal subunit.

Functionally, located on the platform of the 30S subunit. The polypeptide is Small ribosomal subunit protein uS11 (Hyperthermus butylicus (strain DSM 5456 / JCM 9403 / PLM1-5)).